An 839-amino-acid chain; its full sequence is Probable beta-glucosidase I (839 aa).

N-linked (GlcNAc...) asparagine glycosylation is present at Asn197. Asp225 is an active-site residue. One can recognise a PA14 domain in the interval 395–555 (DGKTGFSFKV…GQEELISNAV (161 aa)). An N-linked (GlcNAc...) asparagine glycan is attached at Asn620.

This sequence belongs to the glycosyl hydrolase 3 family.

The protein localises to the secreted. The catalysed reaction is Hydrolysis of terminal, non-reducing beta-D-glucosyl residues with release of beta-D-glucose.. Its pathway is glycan metabolism; cellulose degradation. In terms of biological role, beta-glucosidases are one of a number of cellulolytic enzymes involved in the degradation of cellulosic biomass. Catalyzes the last step releasing glucose from the inhibitory cellobiose. The chain is Probable beta-glucosidase I (bglI) from Aspergillus oryzae (strain ATCC 42149 / RIB 40) (Yellow koji mold).